Reading from the N-terminus, the 297-residue chain is HTH-type transcriptional regulator ArgP (297 aa).

The HTH lysR-type domain maps to 4–60 (PDYRTLQALDAVIRERGFERAAQKLCITQSAVSQRIKQLENLFGQPLLVRTIPPRPT). A DNA-binding region (H-T-H motif) is located at residues 21–40 (FERAAQKLCITQSAVSQRIK).

Belongs to the LysR transcriptional regulatory family. In terms of assembly, homodimer.

Functionally, controls the transcription of genes involved in arginine and lysine metabolism. This Pectobacterium atrosepticum (strain SCRI 1043 / ATCC BAA-672) (Erwinia carotovora subsp. atroseptica) protein is HTH-type transcriptional regulator ArgP.